The chain runs to 404 residues: O-antigen ligase (404 aa).

Transmembrane regions (helical) follow at residues 16-32 (IWNK…YFLD), 39-55 (HLII…QVSR), 67-84 (SVFY…YSIL), 96-115 (FENT…PVLL), 127-147 (VLFS…ILYI), 168-183 (SMVF…WLFR), 189-221 (LVFL…GVLW), 228-246 (WKLI…ALVI), 324-343 (ILYI…VYLY), 363-379 (YNAH…FYIV), and 385-401 (QVDI…LLAL).

The protein belongs to the O-antigen ligase family.

Its subcellular location is the cell inner membrane. It catalyses the reaction a lipid-linked O antigen + a lipid A-core oligosaccharide = a lipopolysaccharide + a polyisoprenyl diphosphate.. Its pathway is bacterial outer membrane biogenesis; lipopolysaccharide biosynthesis. In terms of biological role, transferase involved in the biosynthesis of the lipopolysaccharide (LPS). Catalyzes the transfer of a polymerized O-antigen molecule from its polyprenyl diphosphate membrane anchor to a terminal sugar of the lipid A-core oligosaccharide, finalizing the biosynthesis of the lipopolysaccharide. May also be involved in a feedback mechanism to regulate O-unit synthesis, based on the availability of O units on the periplasmic face of the membrane. This Salmonella typhimurium (strain LT2 / SGSC1412 / ATCC 700720) protein is O-antigen ligase.